A 589-amino-acid chain; its full sequence is Phenylalanine--tRNA ligase beta subunit (589 aa).

A B5 domain is found at 302–379 (LAYRKEMVRA…IAYGYNNIQM (78 aa)). Residues Asp357, Asp363, Glu366, and Asp367 each coordinate Mg(2+).

Belongs to the phenylalanyl-tRNA synthetase beta subunit family. Type 2 subfamily. Heterotetramer; dimer of two heterodimers formed by FARSA and FARSB. Mg(2+) serves as cofactor.

The protein localises to the cytoplasm. It carries out the reaction tRNA(Phe) + L-phenylalanine + ATP = L-phenylalanyl-tRNA(Phe) + AMP + diphosphate + H(+). This is Phenylalanine--tRNA ligase beta subunit (FARSB) from Homo sapiens (Human).